Consider the following 1259-residue polypeptide: MANYLAQFQTIKNSCDRLVAAVEDVCDLWPTVKGLFEEHQPLKRAFLTNKTRNPVFVENLPVEFILTTDARLRSRFPQEQYLFWFREPYATIVLVTCEDLDEFKNILKPRLKLIVQNDEREWFIVFVSKAHPSNDQATKNVKKVYAKLEVDFSSKKRERCCKLDVHGPEGNFWEDLELKITECIRNTLDRRAQFYEDEIRKLSEQRFMPIWNFCNFFILKESLAFIFEMAHLHEDALREYDELELCYLETVNMPGKQRDFGGFDGEDDQAVLLKPGSKPLTQIVQDDSFREFEFRQYLFACQSRLLFKLNRPFEVASRGYSFVISFAKALTLHESVLPFCMREVWVITACLALIEATASHHHDGVVAPDIEKEFFRLQGDLYSLSRVKFMRLGYLIGYGTDIEKSPLNSACLSMLPWPKPAVWPSLPQDASSEVLEKEKTILQATSRTKHFGIQRKALPLEPSVLLRVANRRRASLSTGNIPEMFDGRPSFTEGSGLEASPRTPSSLKVQAPPMSRTNSSPGNFESPLDRPMRLAEIFVAAEHALRLTISDHDLLKTLSSIQDFENKYLNLTKGAAENYHRSWWKRHGVVLDGEIAAVCFKHGKYDLAANSYEKVCALYAGEGWQDLLAEVLPNLAQCQKILDDQAGYMSSCVRLLSLDKGLFSSKERQAFQSEVVTLAHSEMKNPVPLDVSSLITFSGNTGPPLQLCDGDPGNLSVTVWSGFPDDITLDSLSLTLVATNNTDEGGQALKSSAATVLNPGRNTITFALPPQKPGSYVLGVVTGQIGRLRFRSHSFSKGGPADSDDFMSYEKPTRPILKVSKPRALVDLAAAVSSALLINEAQWIGIIVRPIAYSLKGAILHIDTGPGLKIEDSYGIEMERYMDADCDTGASKAEVFVEDSPVSSKRDSEVLNLCDGKIVFSDWASNVSSILWVPVRALSEKLARGSSSVTPLKQDILEGMRTVALKLEFGVHHNQIFERTIAAHFTDPFDVTTRVANKCNDGTLVLQVMLHSLVKANLIVLDVWLDLQDGFIHGQNDGRPTSTFFPLVVSPGSRAAVVFSICLDKSMSSEGKDLQLPESILNIKYGIHGDRAAGAHRPVDADHSETDTEGRDLVFKSAIVLQRPVLDPCLTVGFLPLPSDGLRVGKLITMQWRVERLKELKESEAVEQQHDEVLYEVNANSENWMIAGRKRGHVSLSEEQGSRVVISILCVPLVAGYVRPPQLGLPNVEEANVSSNPSGPHLVCVLPPLLSSSYCLPVK.

An N-acetylalanine modification is found at alanine 2. The tract at residues 479-526 (GNIPEMFDGRPSFTEGSGLEASPRTPSSLKVQAPPMSRTNSSPGNFES) is disordered.

Belongs to the TMEM1 family. As to quaternary structure, part of the multisubunit TRAPP (transport protein particle) II complex composed of BET3, BET5, TRS20, TRS23, TRS31, TRS33, TRS65, TRS85, TRS120 and TRS130.

The protein localises to the golgi apparatus. The protein resides in the trans-Golgi network. It is found in the early endosome. Specific subunit of the TRAPP II complex, a highly conserved vesicle tethering complex that is required for the proper transport of proteins in post-Golgi trafficking pathways to the growing cell plate in mitotic active cells. Required for the polarized and selective transport of PIN2, but not PIN1, to the plasma membrane. Not required for ER-to-Golgi as well as biosynthetic and endocytic vacuolar transport. The polypeptide is Trafficking protein particle complex II-specific subunit 130 homolog (Arabidopsis thaliana (Mouse-ear cress)).